A 215-amino-acid chain; its full sequence is Large ribosomal subunit protein uL3 (215 aa).

The segment at 136 to 155 (GVSISHRSHGSTGQRQDPGK) is disordered. The residue at position 151 (Gln-151) is an N5-methylglutamine.

This sequence belongs to the universal ribosomal protein uL3 family. As to quaternary structure, part of the 50S ribosomal subunit. Forms a cluster with proteins L14 and L19. Post-translationally, methylated by PrmB.

Functionally, one of the primary rRNA binding proteins, it binds directly near the 3'-end of the 23S rRNA, where it nucleates assembly of the 50S subunit. The protein is Large ribosomal subunit protein uL3 of Rickettsia felis (strain ATCC VR-1525 / URRWXCal2) (Rickettsia azadi).